A 255-amino-acid chain; its full sequence is uncharacterized protein (255 aa).

[4Fe-4S] cluster is bound by residues C122 and C160.

Homodimer. The cofactor is [4Fe-4S] cluster.

This is an uncharacterized protein from Escherichia coli (strain K12).